A 444-amino-acid chain; its full sequence is UDP-N-acetylglucosamine 1-carboxyvinyltransferase (444 aa).

Phosphoenolpyruvate is bound at residue 22 to 23 (KN). R94 provides a ligand contact to UDP-N-acetyl-alpha-D-glucosamine. The Proton donor role is filled by D119. Residues D309 and V331 each contribute to the UDP-N-acetyl-alpha-D-glucosamine site.

The protein belongs to the EPSP synthase family. MurA subfamily.

Its subcellular location is the cytoplasm. It catalyses the reaction phosphoenolpyruvate + UDP-N-acetyl-alpha-D-glucosamine = UDP-N-acetyl-3-O-(1-carboxyvinyl)-alpha-D-glucosamine + phosphate. Its pathway is cell wall biogenesis; peptidoglycan biosynthesis. In terms of biological role, cell wall formation. Adds enolpyruvyl to UDP-N-acetylglucosamine. The chain is UDP-N-acetylglucosamine 1-carboxyvinyltransferase from Chlamydia trachomatis serovar A (strain ATCC VR-571B / DSM 19440 / HAR-13).